The following is a 60-amino-acid chain: UPF0434 protein PM0859 (60 aa).

This sequence belongs to the UPF0434 family.

This chain is UPF0434 protein PM0859, found in Pasteurella multocida (strain Pm70).